Here is a 91-residue protein sequence, read N- to C-terminus: ATP synthase subunit c 1 (91 aa).

The next 2 helical transmembrane spans lie at F4 to I24 and I53 to L73.

This sequence belongs to the ATPase C chain family. As to quaternary structure, F-type ATPases have 2 components, F(1) - the catalytic core - and F(0) - the membrane proton channel. F(1) has five subunits: alpha(3), beta(3), gamma(1), delta(1), epsilon(1). F(0) has three main subunits: a(1), b(2) and c(10-14). The alpha and beta chains form an alternating ring which encloses part of the gamma chain. F(1) is attached to F(0) by a central stalk formed by the gamma and epsilon chains, while a peripheral stalk is formed by the delta and b chains.

It localises to the cell inner membrane. In terms of biological role, f(1)F(0) ATP synthase produces ATP from ADP in the presence of a proton or sodium gradient. F-type ATPases consist of two structural domains, F(1) containing the extramembraneous catalytic core and F(0) containing the membrane proton channel, linked together by a central stalk and a peripheral stalk. During catalysis, ATP synthesis in the catalytic domain of F(1) is coupled via a rotary mechanism of the central stalk subunits to proton translocation. Key component of the F(0) channel; it plays a direct role in translocation across the membrane. A homomeric c-ring of between 10-14 subunits forms the central stalk rotor element with the F(1) delta and epsilon subunits. The protein is ATP synthase subunit c 1 of Pelobacter propionicus (strain DSM 2379 / NBRC 103807 / OttBd1).